The following is a 395-amino-acid chain: Acetate kinase (395 aa).

Asn-7 contacts Mg(2+). Lys-14 is an ATP binding site. Arg-90 lines the substrate pocket. Asp-147 acts as the Proton donor/acceptor in catalysis. ATP-binding positions include 207–211 (HLGNG), 282–284 (DFR), and 330–334 (GLGEN). Glu-383 provides a ligand contact to Mg(2+).

It belongs to the acetokinase family. As to quaternary structure, homodimer. The cofactor is Mg(2+). It depends on Mn(2+) as a cofactor.

It is found in the cytoplasm. It carries out the reaction acetate + ATP = acetyl phosphate + ADP. It functions in the pathway metabolic intermediate biosynthesis; acetyl-CoA biosynthesis; acetyl-CoA from acetate: step 1/2. Catalyzes the formation of acetyl phosphate from acetate and ATP. Can also catalyze the reverse reaction. This is Acetate kinase from Lachnoclostridium phytofermentans (strain ATCC 700394 / DSM 18823 / ISDg) (Clostridium phytofermentans).